We begin with the raw amino-acid sequence, 254 residues long: Ubiquinone/menaquinone biosynthesis C-methyltransferase UbiE (254 aa).

S-adenosyl-L-methionine contacts are provided by residues Thr77, Asp98, 126–127 (NA), and Ser143.

It belongs to the class I-like SAM-binding methyltransferase superfamily. MenG/UbiE family.

The enzyme catalyses a 2-demethylmenaquinol + S-adenosyl-L-methionine = a menaquinol + S-adenosyl-L-homocysteine + H(+). It carries out the reaction a 2-methoxy-6-(all-trans-polyprenyl)benzene-1,4-diol + S-adenosyl-L-methionine = a 5-methoxy-2-methyl-3-(all-trans-polyprenyl)benzene-1,4-diol + S-adenosyl-L-homocysteine + H(+). It functions in the pathway quinol/quinone metabolism; menaquinone biosynthesis; menaquinol from 1,4-dihydroxy-2-naphthoate: step 2/2. It participates in cofactor biosynthesis; ubiquinone biosynthesis. Its function is as follows. Methyltransferase required for the conversion of demethylmenaquinol (DMKH2) to menaquinol (MKH2) and the conversion of 2-polyprenyl-6-methoxy-1,4-benzoquinol (DDMQH2) to 2-polyprenyl-3-methyl-6-methoxy-1,4-benzoquinol (DMQH2). The protein is Ubiquinone/menaquinone biosynthesis C-methyltransferase UbiE of Hydrogenovibrio crunogenus (strain DSM 25203 / XCL-2) (Thiomicrospira crunogena).